Here is a 337-residue protein sequence, read N- to C-terminus: Fructose-1,6-bisphosphatase class 1 (337 aa).

Mg(2+) contacts are provided by glutamate 89, aspartate 112, leucine 114, and aspartate 115. Residues 115 to 118, asparagine 208, tyrosine 241, and lysine 271 contribute to the substrate site; that span reads DGSS. Glutamate 277 lines the Mg(2+) pocket.

This sequence belongs to the FBPase class 1 family. In terms of assembly, homotetramer. Mg(2+) is required as a cofactor.

The protein localises to the cytoplasm. It carries out the reaction beta-D-fructose 1,6-bisphosphate + H2O = beta-D-fructose 6-phosphate + phosphate. It participates in carbohydrate biosynthesis; gluconeogenesis. This chain is Fructose-1,6-bisphosphatase class 1, found in Psychromonas ingrahamii (strain DSM 17664 / CCUG 51855 / 37).